We begin with the raw amino-acid sequence, 621 residues long: Probable serine/threonine-protein kinase WNK2 (621 aa).

Residues glycine 28–leucine 286 enclose the Protein kinase domain. ATP is bound by residues threonine 108–phenylalanine 111 and lysine 158. Aspartate 175 serves as the catalytic Proton acceptor. Disordered regions lie at residues serine 438–proline 490, valine 501–aspartate 520, glycine 527–serine 553, and histidine 600–proline 621.

Belongs to the protein kinase superfamily. Ser/Thr protein kinase family. WNK subfamily.

It catalyses the reaction L-seryl-[protein] + ATP = O-phospho-L-seryl-[protein] + ADP + H(+). The enzyme catalyses L-threonyl-[protein] + ATP = O-phospho-L-threonyl-[protein] + ADP + H(+). The polypeptide is Probable serine/threonine-protein kinase WNK2 (WNK2) (Oryza sativa subsp. japonica (Rice)).